We begin with the raw amino-acid sequence, 142 residues long: HTH-type transcriptional regulator MntR (142 aa).

Residues 1 to 63 enclose the HTH dtxR-type domain; sequence MPTPSMEDYI…YEKYRGLILT (63 aa). Residues Asp-8, Glu-11, His-77, Glu-99, Glu-102, and His-103 each contribute to the Mn(2+) site.

This sequence belongs to the DtxR/MntR family. Homodimer.

The protein resides in the cytoplasm. With respect to regulation, DNA binding is strongly activated by Mn(2+). Functionally, central regulator of manganese homeostasis. This is HTH-type transcriptional regulator MntR from Listeria innocua serovar 6a (strain ATCC BAA-680 / CLIP 11262).